Here is a 446-residue protein sequence, read N- to C-terminus: GTPase Der (446 aa).

2 consecutive EngA-type G domains span residues 2 to 166 (TVVA…PEAP) and 179 to 354 (IRVS…RQYN). GTP contacts are provided by residues 8–15 (GRPNVGKS), 55–59 (DTAGF), 118–121 (NKID), 185–192 (GRPNVGKS), 232–236 (DTAGI), and 297–300 (NKWD). Residues 355–440 (QRVTTGIVNR…PIRLIFRPRQ (86 aa)) form the KH-like domain.

The protein belongs to the TRAFAC class TrmE-Era-EngA-EngB-Septin-like GTPase superfamily. EngA (Der) GTPase family. In terms of assembly, associates with the 50S ribosomal subunit.

In terms of biological role, GTPase that plays an essential role in the late steps of ribosome biogenesis. This chain is GTPase Der, found in Syntrophobacter fumaroxidans (strain DSM 10017 / MPOB).